Here is a 343-residue protein sequence, read N- to C-terminus: Small ribosomal subunit biogenesis GTPase RsgA (343 aa).

A CP-type G domain is found at 116–275; the sequence is RGQLKPVAAN…LIDSPGIREF (160 aa). GTP-binding positions include 163–166 and 217–225; these read NKAD and GQSGVGKSS. Residues cysteine 299, cysteine 304, histidine 306, and cysteine 312 each contribute to the Zn(2+) site.

The protein belongs to the TRAFAC class YlqF/YawG GTPase family. RsgA subfamily. In terms of assembly, monomer. Associates with 30S ribosomal subunit, binds 16S rRNA. Zn(2+) serves as cofactor.

Its subcellular location is the cytoplasm. Functionally, one of several proteins that assist in the late maturation steps of the functional core of the 30S ribosomal subunit. Helps release RbfA from mature subunits. May play a role in the assembly of ribosomal proteins into the subunit. Circularly permuted GTPase that catalyzes slow GTP hydrolysis, GTPase activity is stimulated by the 30S ribosomal subunit. This chain is Small ribosomal subunit biogenesis GTPase RsgA, found in Pseudomonas savastanoi pv. phaseolicola (strain 1448A / Race 6) (Pseudomonas syringae pv. phaseolicola (strain 1448A / Race 6)).